Consider the following 70-residue polypeptide: U2-agatoxin-Ao1r (70 aa).

The first 20 residues, 1-20, serve as a signal peptide directing secretion; that stretch reads MRSIISLILISAMVFSMIAP. Positions 21–34 are excised as a propeptide; the sequence is VPEEERLQLSEDER. Disulfide bonds link Cys-37–Cys-53, Cys-44–Cys-58, and Cys-52–Cys-68. Leu-69 carries the post-translational modification Leucine amide.

It belongs to the neurotoxin 01 (U2-agtx) family. As to expression, expressed by the venom gland.

Its subcellular location is the secreted. Its function is as follows. Insect active toxin causing rapid but reversible paralysis in crickets. No activity shown in mammals. Does not show effect on mammalian voltage-gated calcium channels. This Agelena orientalis (Funnel-web spider) protein is U2-agatoxin-Ao1r.